A 116-amino-acid chain; its full sequence is MTEQAEDTMPIRFTDAAAAKVKTLLEEEQNDALKLRVYVTGGGCSGFQYGFTFDEKVNEGDFTVEKQGVQLVVDPMSLQYLVGGEVDYTSGLEGSRFFVKNPNATTTCGCGASFSV.

Iron-sulfur cluster-binding residues include Cys44, Cys108, and Cys110.

This sequence belongs to the HesB/IscA family. Homodimer. The cofactor is iron-sulfur cluster.

Its function is as follows. Required for insertion of 4Fe-4S clusters for at least IspG. The protein is Iron-sulfur cluster insertion protein ErpA of Shewanella loihica (strain ATCC BAA-1088 / PV-4).